The sequence spans 342 residues: Ribosomal RNA small subunit methyltransferase C (342 aa).

This sequence belongs to the methyltransferase superfamily. RsmC family. In terms of assembly, monomer.

It localises to the cytoplasm. The catalysed reaction is guanosine(1207) in 16S rRNA + S-adenosyl-L-methionine = N(2)-methylguanosine(1207) in 16S rRNA + S-adenosyl-L-homocysteine + H(+). Specifically methylates the guanine in position 1207 of 16S rRNA in the 30S particle. The chain is Ribosomal RNA small subunit methyltransferase C from Aeromonas hydrophila subsp. hydrophila (strain ATCC 7966 / DSM 30187 / BCRC 13018 / CCUG 14551 / JCM 1027 / KCTC 2358 / NCIMB 9240 / NCTC 8049).